Reading from the N-terminus, the 421-residue chain is Glutamate-1-semialdehyde 2,1-aminomutase (421 aa).

The residue at position 261 (Lys-261) is an N6-(pyridoxal phosphate)lysine.

The protein belongs to the class-III pyridoxal-phosphate-dependent aminotransferase family. HemL subfamily. Pyridoxal 5'-phosphate is required as a cofactor.

The protein resides in the cytoplasm. The catalysed reaction is (S)-4-amino-5-oxopentanoate = 5-aminolevulinate. The protein operates within porphyrin-containing compound metabolism; protoporphyrin-IX biosynthesis; 5-aminolevulinate from L-glutamyl-tRNA(Glu): step 2/2. The chain is Glutamate-1-semialdehyde 2,1-aminomutase (hemL) from Thermoplasma acidophilum (strain ATCC 25905 / DSM 1728 / JCM 9062 / NBRC 15155 / AMRC-C165).